The chain runs to 448 residues: Probable sodium-coupled neutral amino acid transporter 6 (448 aa).

Composition is skewed to polar residues over residues 1 to 12 (MQASDSSINTLD) and 26 to 36 (LLANSPQRRSS). Positions 1–36 (MQASDSSINTLDGHQVSAGRDESTPLLANSPQRRSS) are disordered. 5 consecutive transmembrane segments (helical) span residues 40–60 (SFGF…ILGL), 69–89 (ILGF…SIHL), 117–137 (LVAC…LFII), 164–184 (LLII…KIGF), and 185–205 (LGYT…VIVI). Cysteine 212 and cysteine 232 are oxidised to a cystine. 2 N-linked (GlcNAc...) asparagine glycosylation sites follow: asparagine 218 and asparagine 228. 6 consecutive transmembrane segments (helical) span residues 244–264 (AFAL…LPIY), 281–301 (VGIA…YLTF), 321–341 (VLII…VPLI), 365–385 (ILVT…VPDM), 388–408 (VFGV…PGLF), and 425–445 (ACGL…LIIM).

Belongs to the amino acid/polyamine transporter 2 family.

It is found in the cell membrane. Functionally, probable sodium-dependent amino acid/proton antiporter, could be a neuronal transporter for glutamate. This chain is Probable sodium-coupled neutral amino acid transporter 6 (slc38a6), found in Xenopus tropicalis (Western clawed frog).